Reading from the N-terminus, the 509-residue chain is Zinc finger protein CKR1 (509 aa).

Positions 1-61 (MEPYVLLDPR…GSEEPQTHPP (61 aa)) constitute a KRAB domain. 2 stretches are compositionally biased toward basic and acidic residues: residues 41–50 (EDAVGLKEDA) and 98–112 (PKRDGVKPSRVRDRP). The tract at residues 41–114 (EDAVGLKEDA…PSRVRDRPFG (74 aa)) is disordered. 11 consecutive C2H2-type zinc fingers follow at residues 113–135 (FGCPDCGKSFPWASHLERHRRVH), 141–163 (YSCPECGESYSQSSHLVQHRRTH), 169–191 (HKCQHCGKPFAGAAQLLAHSRGH), 197–219 (HRCGDCGKGFVWASHLERHRRVH), 225–247 (YECPECGEAFSQGSHLTKHRRSH), 279–303 (QRCAECGKAFRAAPPLRRHRRERSH), 303–325 (HRCGDCGKGFAWASHLQRHRRVH), 331–353 (FPCGLCGERFSQKAHLLQHGKTH), 359–383 (YKCGDCGKRFENAPPFLAHRRGHAA), 387–409 (FTCGDCGKGFAWASHLQRHRRVH), and 415–437 (YECPECGEAFSQGSHLTKHRRSH). Residues 428–479 (SHLTKHRRSHGPKAPLLPVQGRGEAGEPLRASPLSSGAEQRDGRRAQRGGVE) are disordered.

This sequence belongs to the krueppel C2H2-type zinc-finger protein family.

The protein resides in the nucleus. This chain is Zinc finger protein CKR1, found in Gallus gallus (Chicken).